Reading from the N-terminus, the 704-residue chain is Polyribonucleotide nucleotidyltransferase (704 aa).

Mg(2+) is bound by residues Asp-487 and Asp-493. The region spanning 554-613 (PRLLTIKIHPDKIREVIGKGGSTIQAITKETGTQIDIQDDGTIIIASVNAIAAQAAKSRI) is the KH domain. An S1 motif domain is found at 623-691 (GRIYEGKVAK…KQGRIRLSIK (69 aa)).

It belongs to the polyribonucleotide nucleotidyltransferase family. Component of the RNA degradosome, which is a multiprotein complex involved in RNA processing and mRNA degradation. Requires Mg(2+) as cofactor.

The protein localises to the cytoplasm. It carries out the reaction RNA(n+1) + phosphate = RNA(n) + a ribonucleoside 5'-diphosphate. In terms of biological role, involved in mRNA degradation. Catalyzes the phosphorolysis of single-stranded polyribonucleotides processively in the 3'- to 5'-direction. The chain is Polyribonucleotide nucleotidyltransferase from Xanthomonas campestris pv. campestris (strain 8004).